Reading from the N-terminus, the 98-residue chain is Co-chaperonin GroES (98 aa).

The protein belongs to the GroES chaperonin family. In terms of assembly, heptamer of 7 subunits arranged in a ring. Interacts with the chaperonin GroEL.

It is found in the cytoplasm. Together with the chaperonin GroEL, plays an essential role in assisting protein folding. The GroEL-GroES system forms a nano-cage that allows encapsulation of the non-native substrate proteins and provides a physical environment optimized to promote and accelerate protein folding. GroES binds to the apical surface of the GroEL ring, thereby capping the opening of the GroEL channel. The protein is Co-chaperonin GroES of Beutenbergia cavernae (strain ATCC BAA-8 / DSM 12333 / CCUG 43141 / JCM 11478 / NBRC 16432 / NCIMB 13614 / HKI 0122).